The primary structure comprises 505 residues: Protein ERGIC-53-like (505 aa).

An N-terminal signal peptide occupies residues 1 to 25; it reads MLEIRGLSPSLCLLSLLLVLHGAER. Residues 26–438 are Lumenal-facing; sequence SQPPPRRRFE…SGWLLGSSTC (413 aa). Residues 32–254 enclose the L-type lectin-like domain; that stretch reads RRFEYKLSFK…DVLSFLTFSL (223 aa). N-linked (GlcNAc...) asparagine glycosylation occurs at Asn-84. Cys-177 and Cys-216 are disulfide-bonded. A helical membrane pass occupies residues 439 to 459; sequence LHTSIFLFFLLLQTVGFFCYV. Residues 460–505 lie on the Cytoplasmic side of the membrane; it reads NFSRQELDKRLQEYLSTGSLSLEPALPITRTIGVLRRQPISPSMQA.

It is found in the endoplasmic reticulum-Golgi intermediate compartment membrane. The protein is Protein ERGIC-53-like (Lman1l) of Mus musculus (Mouse).